A 1086-amino-acid polypeptide reads, in one-letter code: 1,2-beta-oligoglucan phosphorylase (1086 aa).

D741 acts as the Proton donor in catalysis.

This sequence belongs to the glycosyl hydrolase 94 family. Monomer.

It carries out the reaction [(1-&gt;2)-beta-D-glucosyl](n) + phosphate = [(1-&gt;2)-beta-D-glucosyl](n-1) + alpha-D-glucose 1-phosphate. Catalyzes the reversible phosphorolysis of beta-(1-&gt;2)-D-glucans. The minimum length of the substrate for the phosphorolytic reaction is 3 D-glucose units. This chain is 1,2-beta-oligoglucan phosphorylase, found in Listeria innocua serovar 6a (strain ATCC BAA-680 / CLIP 11262).